The sequence spans 222 residues: MKKQLVNMKGTKDGFVLRLDDQCAYSDLVEELKKKVLEGGIDGKVDVQLYLGYRYCTDEQIDELIHIVQETEQLIVASVQSEVLTVHESNQKMIESQQDTYLGVVRSGQILRSSGDIIIVGNVNPNGRVEAGGNVYVLGKLKGIVHAGVQGNKEAIIAASQFEATHIMIADQVEAMSDEHVKEINQAEMTCAFIGYDGRITYDQIHALKNIRPLLNVSKGGS.

It belongs to the MinC family. Interacts with MinD and FtsZ.

Functionally, cell division inhibitor that blocks the formation of polar Z ring septums. Rapidly oscillates between the poles of the cell to destabilize FtsZ filaments that have formed before they mature into polar Z rings. Prevents FtsZ polymerization. The sequence is that of Probable septum site-determining protein MinC from Lysinibacillus sphaericus (strain C3-41).